The sequence spans 795 residues: Phenylalanine--tRNA ligase beta subunit (795 aa).

Residues 39–148 enclose the tRNA-binding domain; sequence AGSFHGVVVG…ADAPIGTDIR (110 aa). One can recognise a B5 domain in the interval 401–476; that stretch reads PKRATITLRR…RVYGYNNIPD (76 aa). Mg(2+)-binding residues include D454, D460, E463, and E464. The FDX-ACB domain occupies 701–794; that stretch reads SRFPANRRDI…LKERFQASLR (94 aa).

This sequence belongs to the phenylalanyl-tRNA synthetase beta subunit family. Type 1 subfamily. In terms of assembly, tetramer of two alpha and two beta subunits. It depends on Mg(2+) as a cofactor.

It is found in the cytoplasm. The enzyme catalyses tRNA(Phe) + L-phenylalanine + ATP = L-phenylalanyl-tRNA(Phe) + AMP + diphosphate + H(+). The chain is Phenylalanine--tRNA ligase beta subunit (pheT) from Escherichia coli (strain K12).